Here is a 1258-residue protein sequence, read N- to C-terminus: Trafficking protein particle complex subunit 10 (1258 aa).

Phosphoserine is present on Ser707. Disordered stretches follow at residues Pro888–Gly913 and Ser1201–Met1222. The segment covering Glu901–Arg911 has biased composition (basic and acidic residues). Over residues Ser1201–Ser1214 the composition is skewed to low complexity.

It belongs to the TRAPPC10 family. As to quaternary structure, specific component of the multisubunit TRAPP II complex, which includes at least TRAPPC1, TRAPPC2, TRAPPC3, TRAPPC4, TRAPPC5, TRAPPC6A/B, TRAPPC9, TRAPPC10 and TRAPPC14. TRAPPC9, TRAPPC10 and TRAPPC14 are specific subunits of the TRAPP II complex. Interacts with TRAPPC14.

The protein resides in the golgi apparatus. It localises to the cis-Golgi network. Functionally, specific subunit of the TRAPP (transport protein particle) II complex, a highly conserved vesicle tethering complex that functions in late Golgi trafficking as a membrane tether. This Mus musculus (Mouse) protein is Trafficking protein particle complex subunit 10 (Trappc10).